The primary structure comprises 241 residues: Ribose-5-phosphate isomerase A (241 aa).

Residues 29 to 32, 84 to 87, and 97 to 100 contribute to the substrate site; these read TGTT, DGAD, and KGGG. Residue Glu106 is the Proton acceptor of the active site. Lys124 serves as a coordination point for substrate.

This sequence belongs to the ribose 5-phosphate isomerase family. Homodimer.

The catalysed reaction is aldehydo-D-ribose 5-phosphate = D-ribulose 5-phosphate. It participates in carbohydrate degradation; pentose phosphate pathway; D-ribose 5-phosphate from D-ribulose 5-phosphate (non-oxidative stage): step 1/1. Catalyzes the reversible conversion of ribose-5-phosphate to ribulose 5-phosphate. This is Ribose-5-phosphate isomerase A from Thermoplasma volcanium (strain ATCC 51530 / DSM 4299 / JCM 9571 / NBRC 15438 / GSS1).